The sequence spans 93 residues: Large ribosomal subunit protein mL41 (93 aa).

Residues M1 to L13 constitute a mitochondrion transit peptide.

It belongs to the mitochondrion-specific ribosomal protein mL41 family. As to quaternary structure, component of the mitochondrial large ribosomal subunit (mt-LSU). Mature yeast 74S mitochondrial ribosomes consist of a small (37S) and a large (54S) subunit. The 37S small subunit contains a 15S ribosomal RNA (15S mt-rRNA) and at least 32 different proteins. The 54S large subunit contains a 21S rRNA (21S mt-rRNA) and at least 45 different proteins.

It localises to the mitochondrion. Functionally, component of the mitochondrial ribosome (mitoribosome), a dedicated translation machinery responsible for the synthesis of mitochondrial genome-encoded proteins, including at least some of the essential transmembrane subunits of the mitochondrial respiratory chain. The mitoribosomes are attached to the mitochondrial inner membrane and translation products are cotranslationally integrated into the membrane. This Schizosaccharomyces pombe (strain 972 / ATCC 24843) (Fission yeast) protein is Large ribosomal subunit protein mL41 (mrpl27).